An 82-amino-acid polypeptide reads, in one-letter code: Cytochrome c-551 (82 aa).

Residues Cys-12, Cys-15, His-16, and Met-61 each coordinate heme c.

Binds 1 heme c group covalently per subunit.

Its function is as follows. This is a prokaryotic monoheme cytochrome, unreactive with mitochondrial cytochrome C oxidase or reductase. It functions in nitrite and nitrate respiration in Pseudomonas, but it is also found in other bacteria. In Pseudomonas denitrificans, this protein is Cytochrome c-551.